Here is a 179-residue protein sequence, read N- to C-terminus: ATP synthase subunit b, chloroplastic (179 aa).

Residues 28-46 traverse the membrane as a helical segment; that stretch reads LLNILALVAILVYTGKDFL.

This sequence belongs to the ATPase B chain family. F-type ATPases have 2 components, F(1) - the catalytic core - and F(0) - the membrane proton channel. F(1) has five subunits: alpha(3), beta(3), gamma(1), delta(1), epsilon(1). F(0) has four main subunits: a(1), b(1), b'(1) and c(10-14). The alpha and beta chains form an alternating ring which encloses part of the gamma chain. F(1) is attached to F(0) by a central stalk formed by the gamma and epsilon chains, while a peripheral stalk is formed by the delta, b and b' chains.

The protein localises to the plastid. It is found in the chloroplast thylakoid membrane. F(1)F(0) ATP synthase produces ATP from ADP in the presence of a proton or sodium gradient. F-type ATPases consist of two structural domains, F(1) containing the extramembraneous catalytic core and F(0) containing the membrane proton channel, linked together by a central stalk and a peripheral stalk. During catalysis, ATP synthesis in the catalytic domain of F(1) is coupled via a rotary mechanism of the central stalk subunits to proton translocation. In terms of biological role, component of the F(0) channel, it forms part of the peripheral stalk, linking F(1) to F(0). The chain is ATP synthase subunit b, chloroplastic from Thalassiosira pseudonana (Marine diatom).